The primary structure comprises 121 residues: Fluoride-specific ion channel FluC 1 (121 aa).

Transmembrane regions (helical) follow at residues 3 to 23 (YVYI…ISFL), 35 to 55 (IANL…IAFF), 64 to 84 (AITT…LELI), and 92 to 112 (FITL…LCYV). Na(+) contacts are provided by Gly71 and Thr74.

This sequence belongs to the fluoride channel Fluc/FEX (TC 1.A.43) family.

Its subcellular location is the cell membrane. It carries out the reaction fluoride(in) = fluoride(out). Na(+) is not transported, but it plays an essential structural role and its presence is essential for fluoride channel function. Fluoride-specific ion channel. Important for reducing fluoride concentration in the cell, thus reducing its toxicity. The chain is Fluoride-specific ion channel FluC 1 from Staphylococcus aureus (strain NCTC 8325 / PS 47).